We begin with the raw amino-acid sequence, 400 residues long: Diphosphomevalonate decarboxylase (400 aa).

Position 2 is an N-acetylalanine (alanine 2). (R)-5-diphosphomevalonate is bound by residues 23-26 (YWGK) and arginine 78. Residue serine 96 is modified to Phosphoserine. Residues 156–161 (SGSACR) and threonine 212 each bind (R)-5-diphosphomevalonate.

The protein belongs to the diphosphomevalonate decarboxylase family. As to quaternary structure, homodimer. As to expression, expressed in heart, skeletal muscle, lung, liver, brain, pancreas, kidney and placenta.

It localises to the cytoplasm. The catalysed reaction is (R)-5-diphosphomevalonate + ATP = isopentenyl diphosphate + ADP + phosphate + CO2. The protein operates within steroid biosynthesis; cholesterol biosynthesis. In terms of biological role, catalyzes the ATP dependent decarboxylation of (R)-5-diphosphomevalonate to form isopentenyl diphosphate (IPP). Functions in the mevalonate (MVA) pathway leading to isopentenyl diphosphate (IPP), a key precursor for the biosynthesis of isoprenoids and sterol synthesis. In Homo sapiens (Human), this protein is Diphosphomevalonate decarboxylase (MVD).